The sequence spans 704 residues: DNA-binding protein RFX2 (704 aa).

The interval 1–39 (MQNSEGGADSPASVALRPSAAAPPVPASPQRVLVQAASS) is disordered. Low complexity predominate over residues 10–20 (SPASVALRPSA). A Phosphoserine modification is found at Ser-28. A DNA-binding region (RFX-type winged-helix) is located at residues 199-274 (HLQWLLDNYE…YHYYGIRLKP (76 aa)). The interval 292–334 (QQPMHQKPRYRPAQKTDSLGDSSSHSGLHSTPEQTTAAQNQHH) is disordered. Positions 307–334 (TDSLGDSSSHSGLHSTPEQTTAAQNQHH) are enriched in low complexity. The residue at position 416 (Ser-416) is a Phosphoserine.

The protein belongs to the RFX family. Homodimer; probably only forms homodimers in testis. Heterodimer; heterodimerizes with RFX1 and RFX3.

Its subcellular location is the nucleus. It localises to the cytoplasm. Transcription factor that acts as a key regulator of spermatogenesis. Acts by regulating expression of genes required for the haploid phase during spermiogenesis, such as genes required for cilium assembly and function. Recognizes and binds the X-box, a regulatory motif with DNA sequence 5'-GTNRCC(0-3N)RGYAAC-3' present on promoters. Probably activates transcription of the testis-specific histone gene H1-6. The sequence is that of DNA-binding protein RFX2 (RFX2) from Pongo abelii (Sumatran orangutan).